A 712-amino-acid polypeptide reads, in one-letter code: DNA topoisomerase 3 (712 aa).

Positions 2 to 135 (KSLIIAEKPS…TKRLWISSVT (134 aa)) constitute a Toprim domain. Residues Glu8 and Asp104 each coordinate Mg(2+). Positions 152–581 (FNNLYHAALA…EMKAFTNQVV (430 aa)) constitute a Topo IA-type catalytic domain. Residues 186 to 191 (SLGRVQ) form an interaction with DNA region. Tyr305 serves as the catalytic O-(5'-phospho-DNA)-tyrosine intermediate.

This sequence belongs to the type IA topoisomerase family. Requires Mg(2+) as cofactor.

It catalyses the reaction ATP-independent breakage of single-stranded DNA, followed by passage and rejoining.. Functionally, releases the supercoiling and torsional tension of DNA, which is introduced during the DNA replication and transcription, by transiently cleaving and rejoining one strand of the DNA duplex. Introduces a single-strand break via transesterification at a target site in duplex DNA. The scissile phosphodiester is attacked by the catalytic tyrosine of the enzyme, resulting in the formation of a DNA-(5'-phosphotyrosyl)-enzyme intermediate and the expulsion of a 3'-OH DNA strand. The free DNA strand then undergoes passage around the unbroken strand, thus removing DNA supercoils. Finally, in the religation step, the DNA 3'-OH attacks the covalent intermediate to expel the active-site tyrosine and restore the DNA phosphodiester backbone. In Staphylococcus saprophyticus subsp. saprophyticus (strain ATCC 15305 / DSM 20229 / NCIMB 8711 / NCTC 7292 / S-41), this protein is DNA topoisomerase 3.